Consider the following 361-residue polypeptide: Holliday junction branch migration complex subunit RuvB (361 aa).

Composition is skewed to polar residues over residues 1 to 15 (MAIKRSGNNNLSPNV) and 28 to 40 (ERSTSPELEQQEA). A disordered region spans residues 1-41 (MAIKRSGNNNLSPNVKSDLLSPEVIPQERSTSPELEQQEAS). The segment at 13 to 203 (PNVKSDLLSP…FGLIQRLRFY (191 aa)) is large ATPase domain (RuvB-L). ATP is bound by residues leucine 42, arginine 43, glycine 84, lysine 87, threonine 88, threonine 89, 150-152 (EDF), arginine 193, tyrosine 203, and arginine 240. Residue threonine 88 coordinates Mg(2+). The tract at residues 204 to 274 (EVDELQQIIL…LASEALDLYQ (71 aa)) is small ATPAse domain (RuvB-S). Positions 277-361 (KRGLDWTDRL…PTPLLPWKES (85 aa)) are head domain (RuvB-H). DNA is bound by residues arginine 332 and arginine 337.

This sequence belongs to the RuvB family. As to quaternary structure, homohexamer. Forms an RuvA(8)-RuvB(12)-Holliday junction (HJ) complex. HJ DNA is sandwiched between 2 RuvA tetramers; dsDNA enters through RuvA and exits via RuvB. An RuvB hexamer assembles on each DNA strand where it exits the tetramer. Each RuvB hexamer is contacted by two RuvA subunits (via domain III) on 2 adjacent RuvB subunits; this complex drives branch migration. In the full resolvosome a probable DNA-RuvA(4)-RuvB(12)-RuvC(2) complex forms which resolves the HJ.

The protein localises to the cytoplasm. The catalysed reaction is ATP + H2O = ADP + phosphate + H(+). Functionally, the RuvA-RuvB-RuvC complex processes Holliday junction (HJ) DNA during genetic recombination and DNA repair, while the RuvA-RuvB complex plays an important role in the rescue of blocked DNA replication forks via replication fork reversal (RFR). RuvA specifically binds to HJ cruciform DNA, conferring on it an open structure. The RuvB hexamer acts as an ATP-dependent pump, pulling dsDNA into and through the RuvAB complex. RuvB forms 2 homohexamers on either side of HJ DNA bound by 1 or 2 RuvA tetramers; 4 subunits per hexamer contact DNA at a time. Coordinated motions by a converter formed by DNA-disengaged RuvB subunits stimulates ATP hydrolysis and nucleotide exchange. Immobilization of the converter enables RuvB to convert the ATP-contained energy into a lever motion, pulling 2 nucleotides of DNA out of the RuvA tetramer per ATP hydrolyzed, thus driving DNA branch migration. The RuvB motors rotate together with the DNA substrate, which together with the progressing nucleotide cycle form the mechanistic basis for DNA recombination by continuous HJ branch migration. Branch migration allows RuvC to scan DNA until it finds its consensus sequence, where it cleaves and resolves cruciform DNA. Participates in UV-tolerance of Synechocystis PCC 6803. This chain is Holliday junction branch migration complex subunit RuvB, found in Synechocystis sp. (strain ATCC 27184 / PCC 6803 / Kazusa).